We begin with the raw amino-acid sequence, 355 residues long: Protein RecA (355 aa).

65-72 (GPESSGKT) is a binding site for ATP.

It belongs to the RecA family.

It is found in the cytoplasm. Its function is as follows. Can catalyze the hydrolysis of ATP in the presence of single-stranded DNA, the ATP-dependent uptake of single-stranded DNA by duplex DNA, and the ATP-dependent hybridization of homologous single-stranded DNAs. It interacts with LexA causing its activation and leading to its autocatalytic cleavage. This is Protein RecA from Pseudomonas putida (strain W619).